The sequence spans 365 residues: N5-carboxyaminoimidazole ribonucleotide synthase (365 aa).

ATP contacts are provided by residues Arg-102, Lys-143, Gly-148–Gln-154, Glu-177–Val-180, Glu-185, and Asn-256–Glu-257. The ATP-grasp domain maps to Lys-106–Ile-286.

It belongs to the PurK/PurT family. Homodimer.

It catalyses the reaction 5-amino-1-(5-phospho-beta-D-ribosyl)imidazole + hydrogencarbonate + ATP = 5-carboxyamino-1-(5-phospho-D-ribosyl)imidazole + ADP + phosphate + 2 H(+). It participates in purine metabolism; IMP biosynthesis via de novo pathway; 5-amino-1-(5-phospho-D-ribosyl)imidazole-4-carboxylate from 5-amino-1-(5-phospho-D-ribosyl)imidazole (N5-CAIR route): step 1/2. Catalyzes the ATP-dependent conversion of 5-aminoimidazole ribonucleotide (AIR) and HCO(3)(-) to N5-carboxyaminoimidazole ribonucleotide (N5-CAIR). The chain is N5-carboxyaminoimidazole ribonucleotide synthase from Saccharolobus solfataricus (strain ATCC 35092 / DSM 1617 / JCM 11322 / P2) (Sulfolobus solfataricus).